A 332-amino-acid chain; its full sequence is Lipoyl synthase (332 aa).

Positions 79, 84, 90, 105, 109, 112, and 319 each coordinate [4Fe-4S] cluster. Residues phenylalanine 91–lysine 308 enclose the Radical SAM core domain.

The protein belongs to the radical SAM superfamily. Lipoyl synthase family. [4Fe-4S] cluster is required as a cofactor.

The protein resides in the cytoplasm. The enzyme catalyses [[Fe-S] cluster scaffold protein carrying a second [4Fe-4S](2+) cluster] + N(6)-octanoyl-L-lysyl-[protein] + 2 oxidized [2Fe-2S]-[ferredoxin] + 2 S-adenosyl-L-methionine + 4 H(+) = [[Fe-S] cluster scaffold protein] + N(6)-[(R)-dihydrolipoyl]-L-lysyl-[protein] + 4 Fe(3+) + 2 hydrogen sulfide + 2 5'-deoxyadenosine + 2 L-methionine + 2 reduced [2Fe-2S]-[ferredoxin]. Its pathway is protein modification; protein lipoylation via endogenous pathway; protein N(6)-(lipoyl)lysine from octanoyl-[acyl-carrier-protein]: step 2/2. Catalyzes the radical-mediated insertion of two sulfur atoms into the C-6 and C-8 positions of the octanoyl moiety bound to the lipoyl domains of lipoate-dependent enzymes, thereby converting the octanoylated domains into lipoylated derivatives. The polypeptide is Lipoyl synthase (Hahella chejuensis (strain KCTC 2396)).